Consider the following 260-residue polypeptide: Snake venom serine proteinase 4a (260 aa).

The N-terminal stretch at 1-18 is a signal peptide; the sequence is MVLIRVLANLLILQLSYA. A propeptide spanning residues 19-24 is cleaved from the precursor; sequence QMSSEL. The 227-residue stretch at 25 to 251 folds into the Peptidase S1 domain; sequence VTGGDECNRN…HLDWIQRIIA (227 aa). 6 disulfides stabilise this stretch: Cys31–Cys163, Cys50–Cys66, Cys98–Cys258, Cys142–Cys212, Cys174–Cys191, and Cys202–Cys227. Residue His65 is the Charge relay system of the active site. A glycan (N-linked (GlcNAc...) asparagine) is linked at Asn103. The active-site Charge relay system is Asp110. The active-site Charge relay system is Ser206.

This sequence belongs to the peptidase S1 family. Snake venom subfamily. Monomer. As to expression, expressed by the venom gland.

Its subcellular location is the secreted. Its function is as follows. Snake venom serine protease that may act in the hemostasis system of the prey. The chain is Snake venom serine proteinase 4a from Crotalus adamanteus (Eastern diamondback rattlesnake).